The following is a 263-amino-acid chain: Acyl-[acyl-carrier-protein]--UDP-N-acetylglucosamine O-acyltransferase (263 aa).

The protein belongs to the transferase hexapeptide repeat family. LpxA subfamily. As to quaternary structure, homotrimer.

The protein localises to the cytoplasm. It carries out the reaction a (3R)-hydroxyacyl-[ACP] + UDP-N-acetyl-alpha-D-glucosamine = a UDP-3-O-[(3R)-3-hydroxyacyl]-N-acetyl-alpha-D-glucosamine + holo-[ACP]. It participates in glycolipid biosynthesis; lipid IV(A) biosynthesis; lipid IV(A) from (3R)-3-hydroxytetradecanoyl-[acyl-carrier-protein] and UDP-N-acetyl-alpha-D-glucosamine: step 1/6. Its function is as follows. Involved in the biosynthesis of lipid A, a phosphorylated glycolipid that anchors the lipopolysaccharide to the outer membrane of the cell. This chain is Acyl-[acyl-carrier-protein]--UDP-N-acetylglucosamine O-acyltransferase, found in Stenotrophomonas maltophilia (strain K279a).